The primary structure comprises 302 residues: Sulfate adenylyltransferase subunit 2 (302 aa).

It belongs to the PAPS reductase family. CysD subfamily. Heterodimer composed of CysD, the smaller subunit, and CysN.

The enzyme catalyses sulfate + ATP + H(+) = adenosine 5'-phosphosulfate + diphosphate. It functions in the pathway sulfur metabolism; hydrogen sulfide biosynthesis; sulfite from sulfate: step 1/3. Functionally, with CysN forms the ATP sulfurylase (ATPS) that catalyzes the adenylation of sulfate producing adenosine 5'-phosphosulfate (APS) and diphosphate, the first enzymatic step in sulfur assimilation pathway. APS synthesis involves the formation of a high-energy phosphoric-sulfuric acid anhydride bond driven by GTP hydrolysis by CysN coupled to ATP hydrolysis by CysD. This chain is Sulfate adenylyltransferase subunit 2, found in Escherichia coli O6:K15:H31 (strain 536 / UPEC).